A 314-amino-acid chain; its full sequence is DNA-directed RNA polymerase subunit alpha (314 aa).

Residues 1–227 (MLEIEKPKIE…DYLKLFVALT (227 aa)) form an alpha N-terminal domain (alpha-NTD) region. The interval 244–314 (QDKILEMTIE…LGLSLRKSED (71 aa)) is alpha C-terminal domain (alpha-CTD).

It belongs to the RNA polymerase alpha chain family. In terms of assembly, homodimer. The RNAP catalytic core consists of 2 alpha, 1 beta, 1 beta' and 1 omega subunit. When a sigma factor is associated with the core the holoenzyme is formed, which can initiate transcription.

The catalysed reaction is RNA(n) + a ribonucleoside 5'-triphosphate = RNA(n+1) + diphosphate. Functionally, DNA-dependent RNA polymerase catalyzes the transcription of DNA into RNA using the four ribonucleoside triphosphates as substrates. The sequence is that of DNA-directed RNA polymerase subunit alpha from Heliobacterium modesticaldum (strain ATCC 51547 / Ice1).